The primary structure comprises 338 residues: tRNA N6-adenosine threonylcarbamoyltransferase (338 aa).

Residues histidine 111 and histidine 115 each contribute to the Fe cation site. Substrate is bound by residues 133–137 (LVSGG), aspartate 166, glycine 179, aspartate 183, and asparagine 275. Aspartate 300 serves as a coordination point for Fe cation.

It belongs to the KAE1 / TsaD family. Fe(2+) serves as cofactor.

The protein resides in the cytoplasm. It carries out the reaction L-threonylcarbamoyladenylate + adenosine(37) in tRNA = N(6)-L-threonylcarbamoyladenosine(37) in tRNA + AMP + H(+). Functionally, required for the formation of a threonylcarbamoyl group on adenosine at position 37 (t(6)A37) in tRNAs that read codons beginning with adenine. Is involved in the transfer of the threonylcarbamoyl moiety of threonylcarbamoyl-AMP (TC-AMP) to the N6 group of A37, together with TsaE and TsaB. TsaD likely plays a direct catalytic role in this reaction. This chain is tRNA N6-adenosine threonylcarbamoyltransferase, found in Treponema denticola (strain ATCC 35405 / DSM 14222 / CIP 103919 / JCM 8153 / KCTC 15104).